The following is a 250-amino-acid chain: Coproheme decarboxylase (250 aa).

Residues arginine 131, 145 to 149 (YPMNK), histidine 172, and glutamine 185 each bind Fe-coproporphyrin III. Tyrosine 145 is a catalytic residue.

Belongs to the ChdC family. Type 1 subfamily. Requires Fe-coproporphyrin III as cofactor.

The catalysed reaction is Fe-coproporphyrin III + 2 H2O2 + 2 H(+) = heme b + 2 CO2 + 4 H2O. The enzyme catalyses Fe-coproporphyrin III + H2O2 + H(+) = harderoheme III + CO2 + 2 H2O. It carries out the reaction harderoheme III + H2O2 + H(+) = heme b + CO2 + 2 H2O. It participates in porphyrin-containing compound metabolism; protoheme biosynthesis. In terms of biological role, involved in coproporphyrin-dependent heme b biosynthesis. Catalyzes the decarboxylation of Fe-coproporphyrin III (coproheme) to heme b (protoheme IX), the last step of the pathway. The reaction occurs in a stepwise manner with a three-propionate intermediate. The sequence is that of Coproheme decarboxylase from Staphylococcus aureus (strain bovine RF122 / ET3-1).